A 273-amino-acid chain; its full sequence is Mediator of RNA polymerase II transcription subunit 18 (273 aa).

Residues 90-106 show a composition bias toward low complexity; it reads GAQSSAASSGDPDAPMS. A disordered region spans residues 90–114; sequence GAQSSAASSGDPDAPMSGTDTGTNF.

It belongs to the Mediator complex subunit 18 family. As to quaternary structure, component of the Mediator complex.

It localises to the nucleus. Functionally, component of the Mediator complex, a coactivator involved in the regulated transcription of nearly all RNA polymerase II-dependent genes. Mediator functions as a bridge to convey information from gene-specific regulatory proteins to the basal RNA polymerase II transcription machinery. Mediator is recruited to promoters by direct interactions with regulatory proteins and serves as a scaffold for the assembly of a functional preinitiation complex with RNA polymerase II and the general transcription factors. In Aspergillus oryzae (strain ATCC 42149 / RIB 40) (Yellow koji mold), this protein is Mediator of RNA polymerase II transcription subunit 18 (srb5).